A 177-amino-acid chain; its full sequence is FANCD2 opposite strand protein (177 aa).

This is FANCD2 opposite strand protein (FANCD2OS) from Homo sapiens (Human).